Here is a 372-residue protein sequence, read N- to C-terminus: Peptidyl-prolyl cis-trans isomerase D (372 aa).

One can recognise a PPIase cyclophilin-type domain in the interval 14 to 178 (YFDISIGGKS…KEALIVDCGE (165 aa)). TPR repeat units follow at residues 219–252 (AKAS…INEE), 271–304 (FSLN…GGVK), and 309–342 (AKAF…APND).

This sequence belongs to the cyclophilin-type PPIase family. PPIase D subfamily.

The protein resides in the cytoplasm. The enzyme catalyses [protein]-peptidylproline (omega=180) = [protein]-peptidylproline (omega=0). PPIases accelerate the folding of proteins. It catalyzes the cis-trans isomerization of proline imidic peptide bonds in oligopeptides. In Gibberella zeae (strain ATCC MYA-4620 / CBS 123657 / FGSC 9075 / NRRL 31084 / PH-1) (Wheat head blight fungus), this protein is Peptidyl-prolyl cis-trans isomerase D (CPR6).